We begin with the raw amino-acid sequence, 180 residues long: Lipid droplet coating protein Cap20 (180 aa).

It belongs to the perilipin family. As to quaternary structure, interacts with class I hydrophobin Hydr1. Interacts also with the cAMP-dependent protein kinase catalytic subunit PkaC1.

The protein localises to the lipid droplet. In terms of biological role, lipid droplet coating protein that regulates lipid metabolism, appressorial turgor pressure, and virulence. Mature appressoria with high turgor pressure are essential to penetrate the leaf surface. The chain is Lipid droplet coating protein Cap20 from Colletotrichum siamense (Anthracnose fungus).